Consider the following 184-residue polypeptide: Peptide deformylase (184 aa).

Fe cation is bound by residues C96 and H138. Residue E139 is part of the active site. A Fe cation-binding site is contributed by H142.

Belongs to the polypeptide deformylase family. Fe(2+) serves as cofactor.

It catalyses the reaction N-terminal N-formyl-L-methionyl-[peptide] + H2O = N-terminal L-methionyl-[peptide] + formate. Removes the formyl group from the N-terminal Met of newly synthesized proteins. Requires at least a dipeptide for an efficient rate of reaction. N-terminal L-methionine is a prerequisite for activity but the enzyme has broad specificity at other positions. The sequence is that of Peptide deformylase from Cytophaga hutchinsonii (strain ATCC 33406 / DSM 1761 / CIP 103989 / NBRC 15051 / NCIMB 9469 / D465).